The chain runs to 952 residues: DNA topoisomerase 1 (952 aa).

Positions 12-135 (RRLVIVESPA…VKRMVFHEIT (124 aa)) constitute a Toprim domain. The Mg(2+) site is built by Glu-18 and Asp-104. Positions 150 to 602 (NQKLVDAQET…RFYFGEGDGT (453 aa)) constitute a Topo IA-type catalytic domain. Positions 184 to 189 (SAGRVQ) are interaction with DNA. Tyr-334 acts as the O-(5'-phospho-DNA)-tyrosine intermediate in catalysis. The segment at 847–952 (RFGPYVTDGE…KATASKTSED (106 aa)) is disordered. The segment covering 871-884 (TPERGYELLAEKRA) has biased composition (basic and acidic residues). The span at 885–906 (KGPAKKTAKKAVKKTAAKKAPA) shows a compositional bias: basic residues. Low complexity-rich tracts occupy residues 907 to 930 (KKAA…AAKS) and 937 to 952 (AKTA…TSED).

This sequence belongs to the type IA topoisomerase family. Monomer. Requires Mg(2+) as cofactor.

The catalysed reaction is ATP-independent breakage of single-stranded DNA, followed by passage and rejoining.. Releases the supercoiling and torsional tension of DNA, which is introduced during the DNA replication and transcription, by transiently cleaving and rejoining one strand of the DNA duplex. Introduces a single-strand break via transesterification at a target site in duplex DNA. The scissile phosphodiester is attacked by the catalytic tyrosine of the enzyme, resulting in the formation of a DNA-(5'-phosphotyrosyl)-enzyme intermediate and the expulsion of a 3'-OH DNA strand. The free DNA strand then undergoes passage around the unbroken strand, thus removing DNA supercoils. Finally, in the religation step, the DNA 3'-OH attacks the covalent intermediate to expel the active-site tyrosine and restore the DNA phosphodiester backbone. In terms of biological role, relaxes supercoiled plasmid in vitro; in the presence of sIHF (integration host factor) relaxation is decreased. The protein is DNA topoisomerase 1 of Streptomyces coelicolor (strain ATCC BAA-471 / A3(2) / M145).